The sequence spans 630 residues: Chaperone protein HtpG (630 aa).

Residues 1-343 (MAKHQFQTEA…SKDLPLNVSR (343 aa)) form an a; substrate-binding region. A b region spans residues 344 to 554 (EILQSNAVMA…KEDPAFMMAQ (211 aa)). The tract at residues 555–630 (IMKQMGQSGD…RLNRVIAKAI (76 aa)) is c.

This sequence belongs to the heat shock protein 90 family. As to quaternary structure, homodimer.

The protein resides in the cytoplasm. In terms of biological role, molecular chaperone. Has ATPase activity. The polypeptide is Chaperone protein HtpG (Sulfurimonas denitrificans (strain ATCC 33889 / DSM 1251) (Thiomicrospira denitrificans (strain ATCC 33889 / DSM 1251))).